A 322-amino-acid chain; its full sequence is tRNA dimethylallyltransferase (322 aa).

12 to 19 (GPTAAGKT) serves as a coordination point for ATP. A substrate-binding site is contributed by 14–19 (TAAGKT). Interaction with substrate tRNA stretches follow at residues 37-40 (DSAL) and 160-164 (QRLIR).

The protein belongs to the IPP transferase family. As to quaternary structure, monomer. The cofactor is Mg(2+).

It carries out the reaction adenosine(37) in tRNA + dimethylallyl diphosphate = N(6)-dimethylallyladenosine(37) in tRNA + diphosphate. Its function is as follows. Catalyzes the transfer of a dimethylallyl group onto the adenine at position 37 in tRNAs that read codons beginning with uridine, leading to the formation of N6-(dimethylallyl)adenosine (i(6)A). In Pseudomonas putida (Arthrobacter siderocapsulatus), this protein is tRNA dimethylallyltransferase.